A 392-amino-acid chain; its full sequence is L-rhamnonate dehydratase (392 aa).

His22 and Arg48 together coordinate substrate. The Mg(2+) site is built by Asp214, Glu240, and Glu268. The active-site Proton acceptor is His318. A substrate-binding site is contributed by Glu338.

Belongs to the mandelate racemase/muconate lactonizing enzyme family. RhamD subfamily. Homooctamer; tetramer of dimers. It depends on Mg(2+) as a cofactor.

It catalyses the reaction L-rhamnonate = 2-dehydro-3-deoxy-L-rhamnonate + H2O. In terms of biological role, catalyzes the dehydration of L-rhamnonate to 2-keto-3-deoxy-L-rhamnonate (KDR). This Paraburkholderia phymatum (strain DSM 17167 / CIP 108236 / LMG 21445 / STM815) (Burkholderia phymatum) protein is L-rhamnonate dehydratase.